Reading from the N-terminus, the 248-residue chain is tRNA (guanine-N(1)-)-methyltransferase (248 aa).

S-adenosyl-L-methionine is bound by residues G113 and 133 to 138 (IGDYVL).

The protein belongs to the RNA methyltransferase TrmD family. In terms of assembly, homodimer.

The protein localises to the cytoplasm. The catalysed reaction is guanosine(37) in tRNA + S-adenosyl-L-methionine = N(1)-methylguanosine(37) in tRNA + S-adenosyl-L-homocysteine + H(+). Specifically methylates guanosine-37 in various tRNAs. The polypeptide is tRNA (guanine-N(1)-)-methyltransferase (Shewanella loihica (strain ATCC BAA-1088 / PV-4)).